A 525-amino-acid chain; its full sequence is GMP synthase [glutamine-hydrolyzing] (525 aa).

The 190-residue stretch at 13–202 (TILVLDFGSQ…AVDLCHAKQN (190 aa)) folds into the Glutamine amidotransferase type-1 domain. Cys-89 serves as the catalytic Nucleophile. Active-site residues include His-176 and Glu-178. In terms of domain architecture, GMPS ATP-PPase spans 203-400 (WTMENFIDTE…LGIPHDLVWR (198 aa)). 231–237 (SGGVDST) contacts ATP. A Glycyl lysine isopeptide (Lys-Gly) (interchain with G-Cter in ubiquitin) cross-link involves residue Lys-241. Arg-304 is a binding site for XMP. Lys-426 is covalently cross-linked (Glycyl lysine isopeptide (Lys-Gly) (interchain with G-Cter in ubiquitin)). Residues Asp-462, Lys-517, and Glu-523 each contribute to the XMP site.

Homodimer. Requires Mg(2+) as cofactor.

It localises to the cytoplasm. It is found in the cytosol. It carries out the reaction XMP + L-glutamine + ATP + H2O = GMP + L-glutamate + AMP + diphosphate + 2 H(+). It participates in purine metabolism; GMP biosynthesis; GMP from XMP (L-Gln route): step 1/1. Its function is as follows. Catalyzes the conversion of xanthine monophosphate (XMP) to GMP in the presence of glutamine and ATP through an adenyl-XMP intermediate. The sequence is that of GMP synthase [glutamine-hydrolyzing] from Saccharomyces cerevisiae (strain ATCC 204508 / S288c) (Baker's yeast).